A 103-amino-acid chain; its full sequence is Large ribosomal subunit protein bL21 (103 aa).

The protein belongs to the bacterial ribosomal protein bL21 family. As to quaternary structure, part of the 50S ribosomal subunit. Contacts protein L20.

Functionally, this protein binds to 23S rRNA in the presence of protein L20. The chain is Large ribosomal subunit protein bL21 from Shewanella putrefaciens (strain CN-32 / ATCC BAA-453).